The primary structure comprises 367 residues: Zinc finger CCCH domain-containing protein 56 (367 aa).

The interval 38-80 (YNSQWNADGGGGGSSRAGSEQPPPGKKSRGGGGGEGGGNTSKS) is disordered. Over residues 67–76 (GGGGGEGGGN) the composition is skewed to gly residues. 3 C3H1-type zinc fingers span residues 87–114 (FFKTKLCCKFRAGTCPYVTNCNFAHGME), 169–197 (AYKGRHCKKFYTDEGCPYGDACTFLHDEQ), and 245–273 (NWKTRICNKWEMTGYCPFGSKCHFAHGAA).

The polypeptide is Zinc finger CCCH domain-containing protein 56 (Oryza sativa subsp. japonica (Rice)).